The following is a 415-amino-acid chain: [Pyruvate dehydrogenase (acetyl-transferring)] kinase isozyme 3, mitochondrial (415 aa).

Positions 131–362 (IEYKEKFGFD…DAVIYLKALS (232 aa)) constitute a Histidine kinase domain. 247–254 (ELFKNSMR) contacts ATP. Residue Lys-278 is modified to N6-succinyllysine. Residues Asp-287, 306 to 307 (ST), and 323 to 328 (GFGYGL) each bind ATP. The segment at 383–415 (TPEADDWSNPSSEPRDASKYKAKQDKIKSNRTF) is disordered. Residues 395–415 (EPRDASKYKAKQDKIKSNRTF) show a composition bias toward basic and acidic residues.

The protein belongs to the PDK/BCKDK protein kinase family. As to quaternary structure, homodimer. Interacts with the pyruvate dehydrogenase complex subunit DLAT, and is part of the multimeric pyruvate dehydrogenase complex that contains multiple copies of pyruvate dehydrogenase (E1), dihydrolipoamide acetyltransferase (DLAT, E2) and lipoamide dehydrogenase (DLD, E3).

The protein resides in the mitochondrion matrix. It carries out the reaction L-seryl-[pyruvate dehydrogenase E1 alpha subunit] + ATP = O-phospho-L-seryl-[pyruvate dehydrogenase E1 alpha subunit] + ADP + H(+). Functionally, inhibits pyruvate dehydrogenase activity by phosphorylation of the E1 subunit PDHA1, and thereby regulates glucose metabolism and aerobic respiration. Can also phosphorylate PDHA2. Decreases glucose utilization and increases fat metabolism in response to prolonged fasting, and as adaptation to a high-fat diet. Plays a role in glucose homeostasis and in maintaining normal blood glucose levels in function of nutrient levels and under starvation. Plays a role in the generation of reactive oxygen species. This Mus musculus (Mouse) protein is [Pyruvate dehydrogenase (acetyl-transferring)] kinase isozyme 3, mitochondrial (Pdk3).